The sequence spans 134 residues: Ethylmalonyl-CoA/methylmalonyl-CoA epimerase (134 aa).

The VOC domain maps to 4–134 (RLNHVAIAVP…NGCLVELEQV (131 aa)). 3 residues coordinate Co(2+): His7, His79, and Glu130. The active-site Proton donor/acceptor is the Glu130.

This sequence belongs to the methylmalonyl-CoA epimerase family. Requires Co(2+) as cofactor. Mn(2+) serves as cofactor.

It carries out the reaction (2R)-ethylmalonyl-CoA = (2S)-ethylmalonyl-CoA. It catalyses the reaction (R)-methylmalonyl-CoA = (S)-methylmalonyl-CoA. Promiscuous isomerase that catalyzes epimerization of both ethylmalonyl-CoA and methylmalonyl-CoA. Has thus a dual role in the ethylmalonyl-CoA pathway for acetyl-CoA assimilation required for R.sphaeroides growth on acetate as sole carbon source. The chain is Ethylmalonyl-CoA/methylmalonyl-CoA epimerase from Cereibacter sphaeroides (strain ATCC 17023 / DSM 158 / JCM 6121 / CCUG 31486 / LMG 2827 / NBRC 12203 / NCIMB 8253 / ATH 2.4.1.) (Rhodobacter sphaeroides).